We begin with the raw amino-acid sequence, 336 residues long: Isethionate-binding periplasmic protein DctP (336 aa).

Residues 1–23 (MKHLLKAGALVALACIVTLTAGA) form the signal peptide.

The protein belongs to the bacterial solute-binding protein 7 family. As to quaternary structure, the complex comprises the periplasmic solute receptor protein DctP, and the fused transmembrane protein DctMQ.

Its subcellular location is the periplasm. The catalysed reaction is 2-hydroxyethane-1-sulfonate(out) + Na(+)(out) = 2-hydroxyethane-1-sulfonate(in) + Na(+)(in). It functions in the pathway organosulfur degradation; alkanesulfonate degradation. In terms of biological role, part of the tripartite ATP-independent periplasmic (TRAP) transport system DctPQM involved in the uptake of isethionate (2-hydroxyethanesulfonate), which is then catabolized by enzymes encoded by adjacent genes in the locus. The DctP subunit is the solute-binding protein. Thereby is involved in an anaerobic respiration pathway that converts the sulfonate isethionate to ammonia, acetate and sulfide. The protein is Isethionate-binding periplasmic protein DctP of Oleidesulfovibrio alaskensis (strain ATCC BAA-1058 / DSM 17464 / G20) (Desulfovibrio alaskensis).